A 317-amino-acid chain; its full sequence is Beta-ketoacyl-[acyl-carrier-protein] synthase III (317 aa).

Active-site residues include Cys112 and His244. The segment at 245-249 (QANLR) is ACP-binding. Residue Asn274 is part of the active site.

Belongs to the thiolase-like superfamily. FabH family. Homodimer.

The protein localises to the cytoplasm. The enzyme catalyses malonyl-[ACP] + acetyl-CoA + H(+) = 3-oxobutanoyl-[ACP] + CO2 + CoA. Its pathway is lipid metabolism; fatty acid biosynthesis. In terms of biological role, catalyzes the condensation reaction of fatty acid synthesis by the addition to an acyl acceptor of two carbons from malonyl-ACP. Catalyzes the first condensation reaction which initiates fatty acid synthesis and may therefore play a role in governing the total rate of fatty acid production. Possesses both acetoacetyl-ACP synthase and acetyl transacylase activities. Its substrate specificity determines the biosynthesis of branched-chain and/or straight-chain of fatty acids. This chain is Beta-ketoacyl-[acyl-carrier-protein] synthase III, found in Salmonella arizonae (strain ATCC BAA-731 / CDC346-86 / RSK2980).